The primary structure comprises 246 residues: YjeF N-terminal domain-containing 3 (246 aa).

One can recognise a YjeF N-terminal domain in the interval 24 to 234; that stretch reads VATVETELLR…DIQKKYELNL (211 aa).

Interacts with apoa1a. Binds to high-density lipoprotein.

Accelerates cholesterol efflux from endothelial cells to high-density lipoprotein (HDL) and thereby regulates angiogenesis. Orchestrates hematopoietic stem and progenitor cell emergence from the hemogenic endothelium, a type of specialized endothelium manifesting hematopoietic potential. YJEFN3-mediated cholesterol efflux activates endothelial SREBF2, the master transcription factor for cholesterol biosynthesis, which in turn transactivates NOTCH and promotes hematopoietic stem and progenitor cell emergence. In Danio rerio (Zebrafish), this protein is YjeF N-terminal domain-containing 3.